The following is an 876-amino-acid chain: Leucine--tRNA ligase (876 aa).

Positions proline 43–histidine 53 match the 'HIGH' region motif. The 'KMSKS' region signature appears at lysine 632–serine 636. Lysine 635 serves as a coordination point for ATP.

It belongs to the class-I aminoacyl-tRNA synthetase family.

Its subcellular location is the cytoplasm. It catalyses the reaction tRNA(Leu) + L-leucine + ATP = L-leucyl-tRNA(Leu) + AMP + diphosphate. In Sinorhizobium medicae (strain WSM419) (Ensifer medicae), this protein is Leucine--tRNA ligase.